Consider the following 115-residue polypeptide: Large ribosomal subunit protein uL24 (115 aa).

It belongs to the universal ribosomal protein uL24 family. In terms of assembly, part of the 50S ribosomal subunit.

One of two assembly initiator proteins, it binds directly to the 5'-end of the 23S rRNA, where it nucleates assembly of the 50S subunit. Its function is as follows. One of the proteins that surrounds the polypeptide exit tunnel on the outside of the subunit. The protein is Large ribosomal subunit protein uL24 of Deinococcus geothermalis (strain DSM 11300 / CIP 105573 / AG-3a).